The chain runs to 195 residues: Pyruvoyl-dependent arginine decarboxylase AaxB (195 aa).

Ser-53 bears the Pyruvic acid (Ser) mark.

The protein belongs to the pyruvoyl-dependent arginine decarboxylase family. As to quaternary structure, trimer of an alpha-beta dimer. The cofactor is pyruvate.

It localises to the cytoplasm. It catalyses the reaction L-arginine + H(+) = agmatine + CO2. Its activity is regulated as follows. Inhibited by argininamide. In terms of biological role, part of the AaxABC system, catalyzes the decarboxylation of L-arginine. The arginine uptake by the bacterium in the macrophage may be a virulence factor against the host innate immune response. The chain is Pyruvoyl-dependent arginine decarboxylase AaxB (aaxB) from Chlamydia pneumoniae (Chlamydophila pneumoniae).